We begin with the raw amino-acid sequence, 647 residues long: 1-deoxy-D-xylulose-5-phosphate synthase (647 aa).

Thiamine diphosphate-binding positions include H74 and 115–117; that span reads GHS. Mg(2+) is bound at residue D146. Residues 147–148, N175, Y286, and E367 each bind thiamine diphosphate; that span reads GA. N175 lines the Mg(2+) pocket.

It belongs to the transketolase family. DXPS subfamily. In terms of assembly, homodimer. Requires Mg(2+) as cofactor. Thiamine diphosphate is required as a cofactor.

It carries out the reaction D-glyceraldehyde 3-phosphate + pyruvate + H(+) = 1-deoxy-D-xylulose 5-phosphate + CO2. It functions in the pathway metabolic intermediate biosynthesis; 1-deoxy-D-xylulose 5-phosphate biosynthesis; 1-deoxy-D-xylulose 5-phosphate from D-glyceraldehyde 3-phosphate and pyruvate: step 1/1. Functionally, catalyzes the acyloin condensation reaction between C atoms 2 and 3 of pyruvate and glyceraldehyde 3-phosphate to yield 1-deoxy-D-xylulose-5-phosphate (DXP). The protein is 1-deoxy-D-xylulose-5-phosphate synthase of Heliobacterium modesticaldum (strain ATCC 51547 / Ice1).